A 279-amino-acid chain; its full sequence is Epidermal growth factor-like protein 7 (279 aa).

A signal peptide spans 1–21 (MWGSGELLVAWFLVLAAGGTT). One can recognise an EMI domain in the interval 28-109 (SRRVCTVGVS…TNGLPGACGA (82 aa)). 9 disulfide bridges follow: Cys32–Cys94, Cys57–Cys63, Cys93–Cys107, Cys112–Cys122, Cys116–Cys128, Cys130–Cys139, Cys146–Cys157, Cys153–Cys166, and Cys168–Cys181. In terms of domain architecture, EGF-like 1 spans 108–140 (GAAICQPPCGNEGSCIRPGRCRCPVGWQGDTCQ). The short motif at 131–133 (PVG) is the Cell attachment site element. The 41-residue stretch at 142-182 (DVDECSTGEARCPQRCVNTVGSYWCQCWEGQSPSADGVLCL) folds into the EGF-like 2; calcium-binding domain. 2 coiled-coil regions span residues 200-224 (SVVR…QLVL) and 250-274 (FQQL…GSCS).

Interacts with ITGAV/ITGB3 in an RGD-dependent manner, increasing endothelial cell's motility.

The protein resides in the secreted. It is found in the extracellular space. Regulates vascular tubulogenesis in vivo. Inhibits platelet-derived growth factor (PDGF)-BB-induced smooth muscle cell migration and promotes endothelial cell adhesion to the extracellular matrix and angiogenesis. The sequence is that of Epidermal growth factor-like protein 7 (Egfl7) from Rattus norvegicus (Rat).